The chain runs to 186 residues: Ribosome rescue factor SmrB (186 aa).

Residues I99–E174 enclose the Smr domain.

The protein belongs to the SmrB family. As to quaternary structure, associates with collided ribosomes, but not with correctly translating polysomes.

Functionally, acts as a ribosome collision sensor. Detects stalled/collided disomes (pairs of ribosomes where the leading ribosome is stalled and a second ribosome has collided with it) and endonucleolytically cleaves mRNA at the 5' boundary of the stalled ribosome. Stalled/collided disomes form a new interface (primarily via the 30S subunits) that binds SmrB. Cleaved mRNA becomes available for tmRNA ligation, leading to ribosomal subunit dissociation and rescue of stalled ribosomes. The sequence is that of Ribosome rescue factor SmrB from Buchnera aphidicola subsp. Acyrthosiphon pisum (strain 5A).